A 433-amino-acid chain; its full sequence is GPI mannosyltransferase 2 (433 aa).

9 helical membrane passes run 4–24 (LVKP…IISL), 109–129 (TAVI…FYLT), 148–165 (ATFT…GFFT), 172–194 (LSFL…IIPY), 204–226 (FYYT…NCIL), 247–267 (ALLF…RQQF), 322–342 (IPNF…TFYF), 354–374 (LIFI…VQII), and 410–430 (GYIY…VFFL).

Belongs to the PIGV family.

The protein resides in the endoplasmic reticulum membrane. Its pathway is glycolipid biosynthesis; glycosylphosphatidylinositol-anchor biosynthesis. Mannosyltransferase involved in glycosylphosphatidylinositol-anchor biosynthesis. Transfers the second mannose to the glycosylphosphatidylinositol during GPI precursor assembly. The polypeptide is GPI mannosyltransferase 2 (GPI18) (Candida glabrata (strain ATCC 2001 / BCRC 20586 / JCM 3761 / NBRC 0622 / NRRL Y-65 / CBS 138) (Yeast)).